The chain runs to 32 residues: C-reactive protein (32 aa).

The region spanning 2–32 (VIKTLVFQSESNNSFVELIPMKPLNLRAFXL) is the Pentraxin (PTX) domain.

The protein belongs to the pentraxin family. In terms of assembly, homopentamer. Pentraxin (or pentaxin) have a discoid arrangement of 5 non-covalently bound subunits. In terms of processing, glycosylated.

It localises to the secreted. Displays several functions associated with host defense: it promotes agglutination, bacterial capsular swelling, phagocytosis, and complement fixation through its calcium-dependent binding to phosphorylcholine. This chain is C-reactive protein, found in Pleuronectes platessa (European plaice).